A 215-amino-acid chain; its full sequence is Octanoyltransferase (215 aa).

Residues 31-206 (TDAPDEVWLV…QLVKHLDYAE (176 aa)) form the BPL/LPL catalytic domain. Substrate contacts are provided by residues 70–77 (RGGQVTYH), 137–139 (SLG), and 150–152 (GLA). C168 acts as the Acyl-thioester intermediate in catalysis.

This sequence belongs to the LipB family.

The protein localises to the cytoplasm. The catalysed reaction is octanoyl-[ACP] + L-lysyl-[protein] = N(6)-octanoyl-L-lysyl-[protein] + holo-[ACP] + H(+). It participates in protein modification; protein lipoylation via endogenous pathway; protein N(6)-(lipoyl)lysine from octanoyl-[acyl-carrier-protein]: step 1/2. Functionally, catalyzes the transfer of endogenously produced octanoic acid from octanoyl-acyl-carrier-protein onto the lipoyl domains of lipoate-dependent enzymes. Lipoyl-ACP can also act as a substrate although octanoyl-ACP is likely to be the physiological substrate. The protein is Octanoyltransferase of Pseudomonas fluorescens (strain ATCC BAA-477 / NRRL B-23932 / Pf-5).